A 331-amino-acid chain; its full sequence is Neuropeptides B/W receptor type 1 (331 aa).

Topologically, residues 1-43 (MHNASYWGPERANTSCPAPAPTLGCPNASGPAPPLPPPLAVAV) are extracellular. Residues Asn3, Asn13, and Asn27 are each glycosylated (N-linked (GlcNAc...) asparagine). Residues 44–66 (PVVYAVICAVGLAGNSAVLFVLL) form a helical membrane-spanning segment. The Cytoplasmic segment spans residues 67-75 (RAPRRKTVT). The chain crosses the membrane as a helical span at residues 76–100 (NLFILNLAVADELFTLVPPVNIADF). Topologically, residues 101-115 (LLRRWPFGELLCKLV) are extracellular. The cysteines at positions 112 and 191 are disulfide-linked. The chain crosses the membrane as a helical span at residues 116-135 (VAVDQYNTFSSLYFLTVMSA). Residues 136–160 (DRYLVVLATAESRRVAGRTYGAARA) are Cytoplasmic-facing. The helical transmembrane segment at 161-180 (VSLAVWGVATLVVLPFAVFA) threads the bilayer. The Extracellular portion of the chain corresponds to 181-205 (RLDEEQGRRQCVLVFPQPEALWWRA). The helical transmembrane segment at 206–227 (SRLYTLVLGFAIPVSTICVLYT) threads the bilayer. Topologically, residues 228 to 251 (SLLCRLRAIRLDSHAKALDRAKKR) are cytoplasmic. A helical membrane pass occupies residues 252–276 (VTVLVVAILAVCLLVWTPYHLSTVV). The Extracellular portion of the chain corresponds to 277 to 286 (ALTTDLPQTP). A helical membrane pass occupies residues 287 to 301 (LVIAVSYFITSLSYA). At 302-331 (NSCLNPFLYAFLDDSFRRSLRQLLACRTTS) the chain is on the cytoplasmic side.

The protein belongs to the G-protein coupled receptor 1 family.

The protein localises to the cell membrane. Its function is as follows. Interacts specifically with a number of opioid ligands. Receptor for neuropeptides B and W, which may be involved in neuroendocrine system regulation, food intake and the organization of other signals. The polypeptide is Neuropeptides B/W receptor type 1 (NPBWR1) (Bos taurus (Bovine)).